A 1240-amino-acid polypeptide reads, in one-letter code: Phospholipid-transporting ATPase 6 (1240 aa).

At 1-75 the chain is on the cytoplasmic side; sequence MARRRIRSRI…TTRYNLLTFL (75 aa). The chain crosses the membrane as a helical span at residues 76-97; sequence PKCLYEQFHRVANFYFLVAAIL. At 98–101 the chain is on the extracellular side; it reads SVFP. A helical membrane pass occupies residues 102–124; it reads LSPFNKWSMIAPLVFVVGLSMGK. The Cytoplasmic portion of the chain corresponds to 125-306; it reads EALEDWRRFM…SRIEKRMDYI (182 aa). The chain crosses the membrane as a helical span at residues 307-328; sequence IYTLFALLLTVSFISSLGFAVM. Residues 329–360 lie on the Extracellular side of the membrane; it reads TKLLMAEWWYLRPDKPESLTNPTNPLYAWVVH. The helical transmembrane segment at 361–378 threads the bilayer; it reads LITALLLYGYLIPISLYV. At 379 to 943 the chain is on the cytoplasmic side; that stretch reads SIEVVKVLQA…HGHWCYKRIA (565 aa). The active-site 4-aspartylphosphate intermediate is Asp426. Lys625 is covalently cross-linked (Glycyl lysine isopeptide (Lys-Gly) (interchain with G-Cter in ubiquitin)). Mg(2+) is bound by residues Asp888 and Asp892. Residues 944–963 traverse the membrane as a helical segment; it reads QMICYFFYKNITFGLTLFYF. The Extracellular portion of the chain corresponds to 964 to 977; that stretch reads ECFTGFSGQSIYND. The chain crosses the membrane as a helical span at residues 978–997; the sequence is SYLLLFNVVLTSLPVISLGV. Residues 998-1027 are Cytoplasmic-facing; sequence FEQDVPSDVCLQFPALYQQGPKNLFFDWYR. A helical transmembrane segment spans residues 1028–1050; the sequence is ILGWMGNGVYASIVIFTLNLGIF. The Extracellular portion of the chain corresponds to 1051–1063; the sequence is HVQSFRSDGQTAD. The chain crosses the membrane as a helical span at residues 1064–1086; it reads MNAMGTAMFTCIIWAVNVQIALT. At 1087-1092 the chain is on the cytoplasmic side; sequence MSHFTW. The helical transmembrane segment at 1093–1113 threads the bilayer; the sequence is IQHVMIWGSIGAWYVFLALYG. The Extracellular segment spans residues 1114-1130; it reads MLPVKLSGNIFHMLVEI. A helical transmembrane segment spans residues 1131 to 1155; it reads LAPAPIFWLTSLLVIAATTLPYLFH. The Cytoplasmic segment spans residues 1156-1240; the sequence is ISYQRSVNPL…SNDTPSSNSQ (85 aa).

This sequence belongs to the cation transport ATPase (P-type) (TC 3.A.3) family. Type IV subfamily.

The protein localises to the cell membrane. The protein resides in the endomembrane system. The catalysed reaction is ATP + H2O + phospholipidSide 1 = ADP + phosphate + phospholipidSide 2.. In terms of biological role, involved in transport of phospholipids and in regulation of pollen plasma membrane lipid asymmetry. The protein is Phospholipid-transporting ATPase 6 of Arabidopsis thaliana (Mouse-ear cress).